We begin with the raw amino-acid sequence, 101 residues long: Putative membrane protein insertion efficiency factor (101 aa).

Belongs to the UPF0161 family.

The protein localises to the cell inner membrane. Could be involved in insertion of integral membrane proteins into the membrane. This chain is Putative membrane protein insertion efficiency factor, found in Methylobacterium sp. (strain 4-46).